The following is a 181-amino-acid chain: Oligoribonuclease (181 aa).

The Exonuclease domain maps to 8–171; it reads LIWIDLEMTG…DDIRESIAEL (164 aa). Tyr-129 is an active-site residue.

Belongs to the oligoribonuclease family.

The protein localises to the cytoplasm. Its function is as follows. 3'-to-5' exoribonuclease specific for small oligoribonucleotides. The sequence is that of Oligoribonuclease from Alcanivorax borkumensis (strain ATCC 700651 / DSM 11573 / NCIMB 13689 / SK2).